We begin with the raw amino-acid sequence, 148 residues long: Ribonuclease H (148 aa).

The 141-residue stretch at 1-141 (MKTVEIYTDG…ADELANLGVK (141 aa)) folds into the RNase H type-1 domain. Mg(2+) contacts are provided by Asp-9, Glu-47, Asp-69, and Asp-133.

It belongs to the RNase H family. In terms of assembly, monomer. The cofactor is Mg(2+).

The protein resides in the cytoplasm. It catalyses the reaction Endonucleolytic cleavage to 5'-phosphomonoester.. Its function is as follows. Endonuclease that specifically degrades the RNA of RNA-DNA hybrids. In Hahella chejuensis (strain KCTC 2396), this protein is Ribonuclease H.